Reading from the N-terminus, the 447-residue chain is Exodeoxyribonuclease 7 large subunit (447 aa).

Belongs to the XseA family. As to quaternary structure, heterooligomer composed of large and small subunits.

Its subcellular location is the cytoplasm. The catalysed reaction is Exonucleolytic cleavage in either 5'- to 3'- or 3'- to 5'-direction to yield nucleoside 5'-phosphates.. In terms of biological role, bidirectionally degrades single-stranded DNA into large acid-insoluble oligonucleotides, which are then degraded further into small acid-soluble oligonucleotides. In Pediococcus pentosaceus (strain ATCC 25745 / CCUG 21536 / LMG 10740 / 183-1w), this protein is Exodeoxyribonuclease 7 large subunit.